The sequence spans 285 residues: Integrin alpha-1 (285 aa).

The Extracellular segment spans residues 1–285 (ENMTFGTTLV…HYSQDWVMLG (285 aa)). 4 N-linked (GlcNAc...) asparagine glycosylation sites follow: N2, N40, N208, and N232. The region spanning 66-279 (IVLDGSNSIY…QAGFSAHYSQ (214 aa)) is the VWFA domain.

It belongs to the integrin alpha chain family. As to quaternary structure, heterodimer of an alpha and a beta subunit. Alpha-1 associates with beta-1.

The protein resides in the membrane. Functionally, integrin alpha-1/beta-1 is a receptor for laminin and collagen. It recognizes the proline-hydroxylated sequence G-F-P-G-E-R in collagen. Involved in anchorage-dependent, negative regulation of EGF-stimulated cell growth. The protein is Integrin alpha-1 (ITGA1) of Gallus gallus (Chicken).